We begin with the raw amino-acid sequence, 106 residues long: NADH dehydrogenase [ubiquinone] 1 alpha subcomplex subunit 8-B (106 aa).

S2 bears the N-acetylserine mark. CHCH domains lie at 26–67 (GMRC…LKDL) and 68–106 (HQKC…CPLK). 3 consecutive short sequence motifs (cx9C motif) follow at residues 29-39 (CMPENVAFLKC), 49-59 (CLDKGRDVTRC), and 71-81 (CQKEMDDYVGC). 4 disulfides stabilise this stretch: C29-C59, C39-C49, C71-C103, and C81-C92. The Cx10C motif signature appears at 92–103 (CRKEQEAFEKVC).

This sequence belongs to the complex I NDUFA8 subunit family. Complex I is composed of at least 49 different subunits.

The protein localises to the mitochondrion. The protein resides in the mitochondrion intermembrane space. Accessory subunit of the mitochondrial membrane respiratory chain NADH dehydrogenase (Complex I), that is believed not to be involved in catalysis. Complex I functions in the transfer of electrons from NADH to the respiratory chain. The immediate electron acceptor for the enzyme is believed to be ubiquinone. The sequence is that of NADH dehydrogenase [ubiquinone] 1 alpha subcomplex subunit 8-B from Arabidopsis thaliana (Mouse-ear cress).